We begin with the raw amino-acid sequence, 720 residues long: Fatty acid oxidation complex subunit alpha (720 aa).

An enoyl-CoA hydratase/isomerase region spans residues 1-189; it reads MIYQGETLSV…KLGLVDAVVA (189 aa). Aspartate 296 provides a ligand contact to substrate. Residues 311–720 form a 3-hydroxyacyl-CoA dehydrogenase region; the sequence is QPTKKGVVLG…ESYYTQQVNA (410 aa). Residues methionine 324, aspartate 343, 400 to 402, lysine 407, and serine 429 each bind NAD(+); that span reads VVE. The active-site For 3-hydroxyacyl-CoA dehydrogenase activity is histidine 450. Asparagine 453 contributes to the NAD(+) binding site. Substrate is bound by residues asparagine 500 and tyrosine 660.

In the N-terminal section; belongs to the enoyl-CoA hydratase/isomerase family. It in the C-terminal section; belongs to the 3-hydroxyacyl-CoA dehydrogenase family. As to quaternary structure, heterotetramer of two alpha chains (FadB) and two beta chains (FadA).

It carries out the reaction a (3S)-3-hydroxyacyl-CoA + NAD(+) = a 3-oxoacyl-CoA + NADH + H(+). The enzyme catalyses a (3S)-3-hydroxyacyl-CoA = a (2E)-enoyl-CoA + H2O. The catalysed reaction is a 4-saturated-(3S)-3-hydroxyacyl-CoA = a (3E)-enoyl-CoA + H2O. It catalyses the reaction (3S)-3-hydroxybutanoyl-CoA = (3R)-3-hydroxybutanoyl-CoA. It carries out the reaction a (3Z)-enoyl-CoA = a 4-saturated (2E)-enoyl-CoA. The enzyme catalyses a (3E)-enoyl-CoA = a 4-saturated (2E)-enoyl-CoA. It participates in lipid metabolism; fatty acid beta-oxidation. Functionally, involved in the aerobic and anaerobic degradation of long-chain fatty acids via beta-oxidation cycle. Catalyzes the formation of 3-oxoacyl-CoA from enoyl-CoA via L-3-hydroxyacyl-CoA. It can also use D-3-hydroxyacyl-CoA and cis-3-enoyl-CoA as substrate. This is Fatty acid oxidation complex subunit alpha from Photobacterium profundum (strain SS9).